The primary structure comprises 115 residues: Cytochrome c (115 aa).

Cys26, Cys29, His30, and Met91 together coordinate heme c.

This sequence belongs to the cytochrome c family. In terms of processing, binds 1 heme c group covalently per subunit.

It localises to the mitochondrion intermembrane space. In terms of biological role, electron carrier protein. The oxidized form of the cytochrome c heme group can accept an electron from the heme group of the cytochrome c1 subunit of cytochrome reductase. Cytochrome c then transfers this electron to the cytochrome oxidase complex, the final protein carrier in the mitochondrial electron-transport chain. The polypeptide is Cytochrome c (Theileria parva (East coast fever infection agent)).